The primary structure comprises 377 residues: GTPase Obg (377 aa).

The region spanning 1-159 (MKFVDEATIE…RRLRMELKVL (159 aa)) is the Obg domain. A disordered region spans residues 127–148 (NIHFKSSTNRAPRQWTPGKEGE). An OBG-type G domain is found at 160 to 336 (ADVGLLGLPN…LIWALQDYLD (177 aa)). GTP is bound by residues 166–173 (GLPNAGKS), 191–195 (FTTLH), 213–216 (DIPG), 288–291 (NKLD), and 317–319 (SGL). Mg(2+) is bound by residues serine 173 and threonine 193. Residues 339–377 (KRKDQDAQDQADGTYVFEDPRFDASRGGAAPATPPGGDE) form a disordered region.

This sequence belongs to the TRAFAC class OBG-HflX-like GTPase superfamily. OBG GTPase family. Monomer. Mg(2+) is required as a cofactor.

It localises to the cytoplasm. Its function is as follows. An essential GTPase which binds GTP, GDP and possibly (p)ppGpp with moderate affinity, with high nucleotide exchange rates and a fairly low GTP hydrolysis rate. Plays a role in control of the cell cycle, stress response, ribosome biogenesis and in those bacteria that undergo differentiation, in morphogenesis control. In Bordetella bronchiseptica (strain ATCC BAA-588 / NCTC 13252 / RB50) (Alcaligenes bronchisepticus), this protein is GTPase Obg.